The chain runs to 364 residues: Guanine nucleotide-binding protein alpha-6 subunit (364 aa).

The segment at 1–29 (MGAGATGLRGARLSPEERANSSKSRAIDR) is disordered. A lipid anchor (N-myristoyl glycine) is attached at Gly2. Residues 14–29 (SPEERANSSKSRAIDR) are compositionally biased toward basic and acidic residues. Residues 40–363 (NRFKILLLGT…NENLRSAGLH (324 aa)) enclose the G-alpha domain. The tract at residues 43–56 (KILLLGTAESGKST) is G1 motif. Residues 48–55 (GTAESGKS), 186–192 (VHCRIST), 211–215 (DVGGQ), 280–283 (NKYD), and Ala335 contribute to the GTP site. Mg(2+)-binding residues include Ser55 and Thr192. The interval 184 to 192 (DIVHCRIST) is G2 motif. A G3 motif region spans residues 207 to 216 (FKMVDVGGQR). The G4 motif stretch occupies residues 276-283 (VLFLNKYD). Positions 333-338 (TTATDT) are G5 motif.

Belongs to the G-alpha family. As to quaternary structure, g proteins are composed of 3 units; alpha, beta and gamma. The alpha chain contains the guanine nucleotide binding site.

Guanine nucleotide-binding proteins (G proteins) are involved as modulators or transducers in various transmembrane signaling systems. The chain is Guanine nucleotide-binding protein alpha-6 subunit (gpa-6) from Caenorhabditis elegans.